Reading from the N-terminus, the 252-residue chain is ATP synthase subunit a (252 aa).

6 consecutive transmembrane segments (helical) span residues 29–49 (FTNV…FLFI), 87–107 (FFPL…IGLF), 117–137 (IMIT…YGFY), 146–166 (LFVP…IEII), 196–216 (FIVS…LPLI), and 219–239 (VAIT…FTVL).

It belongs to the ATPase A chain family. F-type ATPases have 2 components, CF(1) - the catalytic core - and CF(0) - the membrane proton channel. CF(1) has five subunits: alpha(3), beta(3), gamma(1), delta(1), epsilon(1). CF(0) has three main subunits: a(1), b(2) and c(9-12). The alpha and beta chains form an alternating ring which encloses part of the gamma chain. CF(1) is attached to CF(0) by a central stalk formed by the gamma and epsilon chains, while a peripheral stalk is formed by the delta and b chains.

The protein localises to the cell inner membrane. In terms of biological role, key component of the proton channel; it plays a direct role in the translocation of protons across the membrane. This is ATP synthase subunit a from Bartonella tribocorum (strain CIP 105476 / IBS 506).